Here is a 736-residue protein sequence, read N- to C-terminus: Catalase-peroxidase (736 aa).

The interval 1-30 (MGGNVMTDDKMNSVTSGANKQETGRDMSNR) is disordered. Over residues 12 to 21 (NSVTSGANKQ) the composition is skewed to polar residues. The tryptophyl-tyrosyl-methioninium (Trp-Tyr) (with M-250) cross-link spans 101-224 (WHSAGTYRAG…LAAVQMGLIY (124 aa)). His-102 acts as the Proton acceptor in catalysis. The tryptophyl-tyrosyl-methioninium (Tyr-Met) (with W-101) cross-link spans 224 to 250 (YVNPEGPNGNPDPIAAAKDIREVFARM). His-265 serves as a coordination point for heme b. A disordered region spans residues 351-373 (KGGAGAGTIPDAHDPSKRHAPSM).

It belongs to the peroxidase family. Peroxidase/catalase subfamily. In terms of assembly, homodimer or homotetramer. Heme b serves as cofactor. Formation of the three residue Trp-Tyr-Met cross-link is important for the catalase, but not the peroxidase activity of the enzyme.

It catalyses the reaction H2O2 + AH2 = A + 2 H2O. The enzyme catalyses 2 H2O2 = O2 + 2 H2O. Functionally, bifunctional enzyme with both catalase and broad-spectrum peroxidase activity. The protein is Catalase-peroxidase of Methanosarcina acetivorans (strain ATCC 35395 / DSM 2834 / JCM 12185 / C2A).